We begin with the raw amino-acid sequence, 361 residues long: DNA double-strand break repair protein Mre11 (361 aa).

The Mn(2+) site is built by D7, H9, D48, and N83. The active-site Proton donor is H84. The Mn(2+) site is built by H176, H204, and H206.

The protein belongs to the MRE11/RAD32 family. As to quaternary structure, homodimer. Forms a heterotetramer composed of two Mre11 subunits and two Rad50 subunits. Mn(2+) is required as a cofactor.

With respect to regulation, nuclease activity is regulated by Rad50. Part of the Rad50/Mre11 complex, which is involved in the early steps of DNA double-strand break (DSB) repair. The complex may facilitate opening of the processed DNA ends to aid in the recruitment of HerA and NurA. Mre11 binds to DSB ends and has both double-stranded 3'-5' exonuclease activity and single-stranded endonuclease activity. The polypeptide is DNA double-strand break repair protein Mre11 (Nanoarchaeum equitans (strain Kin4-M)).